We begin with the raw amino-acid sequence, 187 residues long: MSDQSTIAAAITCLAQGEVILYPTEAVYGLGCDPDNQQAVERLLAIKQRPVEKGLILIADNYGQLLKYVDDAKIPMDKRADIFSSWPNAITWVMPAAKNTPKWLTGQYDTIAVRVTNHPTVKRLCQEFGKPLVSTSANLSGQNTVLSIAEAKSQFTEQIGYYVDEPLGGNTQPSTIKDAMNGKVFRG.

The YrdC-like domain occupies 4–187; the sequence is QSTIAAAITC…DAMNGKVFRG (184 aa).

This sequence belongs to the SUA5 family. TsaC subfamily.

It is found in the cytoplasm. It carries out the reaction L-threonine + hydrogencarbonate + ATP = L-threonylcarbamoyladenylate + diphosphate + H2O. Its function is as follows. Required for the formation of a threonylcarbamoyl group on adenosine at position 37 (t(6)A37) in tRNAs that read codons beginning with adenine. Catalyzes the conversion of L-threonine, HCO(3)(-)/CO(2) and ATP to give threonylcarbamoyl-AMP (TC-AMP) as the acyladenylate intermediate, with the release of diphosphate. This is Threonylcarbamoyl-AMP synthase from Pseudoalteromonas translucida (strain TAC 125).